Reading from the N-terminus, the 341-residue chain is MKNLIEVLMLTFNEPLYLFLLVIFPLIIYFNHFLKNRGGKIKFPISLYGNFNSLKLKDYRLNLMYFFTYSFLYLAAMVMVFALAGPSVSKKKMIHLSAGADIVIVLDISPSMGAVEFSSKNRLEFSKELIRGFISQRENDNIGLVAFAKDASIVVPITTDREFFNKKLDDIYIMDLGNGSALGLGISIALSHLKHSEALKRSIVVLTDGVVNSDEIXKDQVINLAQGLNVKIYSIGIGSSEEFSVEFKLRSGKFYQGSFKEVYDPSMLVEISNKTGGLFYSVNDDFSFQFAIQDFSKKENLERKIKIAVDNKDIYKEFLVLAFCLLLVYFIFSKIFLKEIL.

The next 4 helical transmembrane spans lie at 8 to 28, 63 to 83, 171 to 191, and 317 to 337; these read LMLT…PLII, LMYF…VFAL, IYIM…IALS, and EFLV…KIFL. One can recognise a VWFA domain in the interval 101-305; the sequence is DIVIVLDISP…SKKENLERKI (205 aa).

It is found in the cell membrane. This is an uncharacterized protein from Borreliella burgdorferi (strain ATCC 35210 / DSM 4680 / CIP 102532 / B31) (Borrelia burgdorferi).